We begin with the raw amino-acid sequence, 168 residues long: CASP-like protein 4D1 (168 aa).

The Cytoplasmic segment spans residues 1 to 11 (MAPPPPSLASR). Residues 12-32 (MAALILRILTFIFLIASLVIL) form a helical membrane-spanning segment. Over 33-57 (TTNTATLELDLVEVKVHFKDVYAYR) the chain is Extracellular. The chain crosses the membrane as a helical span at residues 58 to 78 (YMLATIVIGLAYTVLQIAFTL). Topologically, residues 79–97 (YYVATGNRMMSGDGNLAFD) are cytoplasmic. The chain crosses the membrane as a helical span at residues 98 to 118 (FFGDKVISYILVTGAAAGFAS). At 119-144 (TKDIKPVFSGSGDFDAFINKGYASAS) the chain is on the extracellular side. A helical membrane pass occupies residues 145-165 (LLLIGFVCTAVLSVFSSYALP). At 166-168 (KQV) the chain is on the cytoplasmic side.

It belongs to the Casparian strip membrane proteins (CASP) family. Homodimer and heterodimers.

Its subcellular location is the cell membrane. The polypeptide is CASP-like protein 4D1 (Ricinus communis (Castor bean)).